We begin with the raw amino-acid sequence, 199 residues long: Probable thymidylate kinase (199 aa).

Residue Gly-9–Thr-16 coordinates ATP.

The protein belongs to the thymidylate kinase family.

It catalyses the reaction dTMP + ATP = dTDP + ADP. This Methanococcus maripaludis (strain DSM 14266 / JCM 13030 / NBRC 101832 / S2 / LL) protein is Probable thymidylate kinase.